We begin with the raw amino-acid sequence, 638 residues long: Mediator of RNA polymerase II transcription subunit 17 (638 aa).

The disordered stretch occupies residues 1–21; sequence MSDSFNLPLRPLTEKRERPDP.

This sequence belongs to the Mediator complex subunit 17 family. Component of the Mediator complex.

Its subcellular location is the nucleus. Functionally, component of the Mediator complex, a coactivator involved in the regulated transcription of nearly all RNA polymerase II-dependent genes. Mediator functions as a bridge to convey information from gene-specific regulatory proteins to the basal RNA polymerase II transcription machinery. Mediator is recruited to promoters by direct interactions with regulatory proteins and serves as a scaffold for the assembly of a functional preinitiation complex with RNA polymerase II and the general transcription factors. This chain is Mediator of RNA polymerase II transcription subunit 17 (srb4), found in Aspergillus oryzae (strain ATCC 42149 / RIB 40) (Yellow koji mold).